A 216-amino-acid chain; its full sequence is Lipoprotein-releasing system ATP-binding protein LolD (216 aa).

Positions 2–216 constitute an ABC transporter domain; sequence IHLEGITKSF…TIHMVDGNII (215 aa). 34–41 contacts ATP; the sequence is GPSGAGKT.

The protein belongs to the ABC transporter superfamily. Lipoprotein translocase (TC 3.A.1.125) family. In terms of assembly, the complex is composed of two ATP-binding proteins (LolD) and two transmembrane proteins (LolC and LolE).

Its subcellular location is the cell inner membrane. Part of the ABC transporter complex LolCDE involved in the translocation of mature outer membrane-directed lipoproteins, from the inner membrane to the periplasmic chaperone, LolA. Responsible for the formation of the LolA-lipoprotein complex in an ATP-dependent manner. The protein is Lipoprotein-releasing system ATP-binding protein LolD of Bacteroides fragilis (strain YCH46).